The following is a 705-amino-acid chain: Elongation factor G (705 aa).

The region spanning 8-290 is the tr-type G domain; it reads EKYRNIGICA…GVVEYLPAPN (283 aa). Residues 17–24, 88–92, and 142–145 contribute to the GTP site; these read AHVDAGKT, DTPGH, and NKMD.

This sequence belongs to the TRAFAC class translation factor GTPase superfamily. Classic translation factor GTPase family. EF-G/EF-2 subfamily.

The protein resides in the cytoplasm. Catalyzes the GTP-dependent ribosomal translocation step during translation elongation. During this step, the ribosome changes from the pre-translocational (PRE) to the post-translocational (POST) state as the newly formed A-site-bound peptidyl-tRNA and P-site-bound deacylated tRNA move to the P and E sites, respectively. Catalyzes the coordinated movement of the two tRNA molecules, the mRNA and conformational changes in the ribosome. The protein is Elongation factor G of Francisella philomiragia subsp. philomiragia (strain ATCC 25017 / CCUG 19701 / FSC 153 / O#319-036).